A 74-amino-acid polypeptide reads, in one-letter code: Hadrucalcin (74 aa).

The N-terminal stretch at 1–27 is a signal peptide; that stretch reads MKTSSLTIIFIAVIITIICLNIHDIEA. Residues 28–39 constitute a propeptide that is removed on maturation; that stretch reads REIEFNAGRVVR. 3 disulfide bridges follow: cysteine 44–cysteine 58, cysteine 51–cysteine 62, and cysteine 57–cysteine 73. The segment at 64-65 is essential for stimulation of [3H]ryanodine binding to RYR1; sequence RR.

As to expression, expressed by the venom gland.

The protein resides in the secreted. Its function is as follows. This toxin activates ryanodine receptors RyR1 and RyR2 by inducing a long-lasting subconductance state (35% of the full conductance stateon RyR1). Furthermore, it triggers calcium release from sarcoplasmic vesicles (11.8 nM are enough to induce a sharp release on RyR1, and 55% of the total calcium is released after toxin (100 nM) addition on RyR1) probably by acting as a cell-penetrating peptide (CPP). In addition, it has been shown to dose-dependently stimulate ryanodine binding to RyR1 (EC(50)=14.8 nM). It also augments the bell-shaped calcium-[3H]ryanodine binding curve that is maximal at about 10 uM calcium concentration. It binds a different site as ryanodine. It acts synergistically with caffeine. In vivo, intracerebroventricular injection into mice induces neurotoxic symptoms, followed by death. The sequence is that of Hadrucalcin from Hoffmannihadrurus gertschi (Scorpion).